The following is a 475-amino-acid chain: Pregnancy-specific glycoprotein 22 (475 aa).

The signal sequence occupies residues methionine 1–glycine 35. Ig-like V-type domains are found at residues lysine 44 to valine 140, proline 162 to valine 260, and proline 280 to valine 380. N-linked (GlcNAc...) asparagine glycosylation is found at asparagine 103, asparagine 110, and asparagine 231. The region spanning proline 387–threonine 471 is the Ig-like C2-type domain. An intrachain disulfide couples cysteine 406 to cysteine 454.

Belongs to the immunoglobulin superfamily. CEA family.

It localises to the secreted. Functionally, may have an angiogenic function during early placental development. Binds to cell-surface heparan sulfate proteoglycans (HSPGs), and stimulates secretion of the proangiogenic factors VEGFA and TGFB from uterine dendritic cells and natural killer cells. Also induces endothelial tube formation in vitro. The protein is Pregnancy-specific glycoprotein 22 of Mus musculus (Mouse).